A 329-amino-acid polypeptide reads, in one-letter code: ADP-L-glycero-D-manno-heptose-6-epimerase (329 aa).

NADP(+)-binding positions include 10-11 (FI), 31-32 (DD), Lys-38, Lys-53, 74-78 (QGACS), and Asn-91. Catalysis depends on Tyr-138, which acts as the Proton acceptor. Position 142 (Lys-142) interacts with NADP(+). Asn-167 contacts substrate. The NADP(+) site is built by Val-168 and Lys-176. Residue Lys-176 is the Proton acceptor of the active site. Substrate contacts are provided by residues Arg-178, His-185, 199–202 (FAGW), Arg-212, and Tyr-291.

Belongs to the NAD(P)-dependent epimerase/dehydratase family. HldD subfamily. Homopentamer. It depends on NADP(+) as a cofactor.

The catalysed reaction is ADP-D-glycero-beta-D-manno-heptose = ADP-L-glycero-beta-D-manno-heptose. It functions in the pathway nucleotide-sugar biosynthesis; ADP-L-glycero-beta-D-manno-heptose biosynthesis; ADP-L-glycero-beta-D-manno-heptose from D-glycero-beta-D-manno-heptose 7-phosphate: step 4/4. Its pathway is bacterial outer membrane biogenesis; LPS core biosynthesis. Its function is as follows. Catalyzes the interconversion between ADP-D-glycero-beta-D-manno-heptose and ADP-L-glycero-beta-D-manno-heptose via an epimerization at carbon 6 of the heptose. The polypeptide is ADP-L-glycero-D-manno-heptose-6-epimerase (Bordetella pertussis (strain Tohama I / ATCC BAA-589 / NCTC 13251)).